Reading from the N-terminus, the 810-residue chain is Coiled-coil domain-containing protein 15 (810 aa).

3 coiled-coil regions span residues 65–89, 160–189, and 638–669; these read VVEE…RQVR, DGEN…SFKT, and MDIE…EQQR.

Interacts with POC5, POC1B, CETN2 and FAM161A.

Its subcellular location is the cytoplasm. The protein localises to the cytoskeleton. It localises to the microtubule organizing center. It is found in the centrosome. The protein resides in the centriole. Its subcellular location is the centriolar satellite. In terms of biological role, plays an important role in primary cilium assembly, maintenance, and length regulation. Interacts with centriole inner scaffold proteins to promote proper centriole size and integrity and assembly of functional cilia. Required for the recruitment of both the inner scaffold protein POC1B and the distal SFI1/CETN2 complex to centrioles. In Mus musculus (Mouse), this protein is Coiled-coil domain-containing protein 15 (Ccdc15).